A 501-amino-acid chain; its full sequence is Prostacyclin synthase (501 aa).

A helical transmembrane segment spans residues M1 to S21. Residues R107, L113, N288, T359–R360, and R383 contribute to the substrate site. C442 serves as a coordination point for heme.

The protein belongs to the cytochrome P450 family. Heme serves as cofactor.

Its subcellular location is the endoplasmic reticulum membrane. It catalyses the reaction prostaglandin H2 = prostaglandin I2. The enzyme catalyses a hydroperoxyeicosatetraenoate = an oxoeicosatetraenoate + H2O. It carries out the reaction (15S)-hydroperoxy-(5Z,8Z,11Z,13E)-eicosatetraenoate = 15-oxo-(5Z,8Z,11Z,13E)-eicosatetraenoate + H2O. The catalysed reaction is (15S)-hydroperoxy-(5Z,8Z,11Z,13E)-eicosatetraenoate + AH2 = (15S)-hydroxy-(5Z,8Z,11Z,13E)-eicosatetraenoate + A + H2O. In terms of biological role, catalyzes the biosynthesis and metabolism of eicosanoids. Catalyzes the isomerization of prostaglandin H2 to prostacyclin (= prostaglandin I2), a potent mediator of vasodilation and inhibitor of platelet aggregation. Additionally, displays dehydratase activity, toward hydroperoxyeicosatetraenoates (HPETEs), especially toward (15S)-hydroperoxy-(5Z,8Z,11Z,13E)-eicosatetraenoate (15(S)-HPETE). The sequence is that of Prostacyclin synthase (Ptgis) from Rattus norvegicus (Rat).